A 123-amino-acid polypeptide reads, in one-letter code: Homeobox protein CDX-1 (123 aa).

Residues 5–64 (KDKYRVVYTDHQRLELEKEFHYSRYITIRRKSELAANLGLTERQVKIWFQNRRAKERKVN) constitute a DNA-binding region (homeobox). Residues 8 to 29 (YRVVYTDHQRLELEKEFHYSRY) form an interaction with DNA region. Positions 47-58 (RQVKIWFQNRRA) are interaction with 5-mCpG DNA. A compositionally biased stretch (basic residues) spans 57–68 (RAKERKVNKKKQ). A disordered region spans residues 57–123 (RAKERKVNKK…PVPVKEEFLP (67 aa)).

It belongs to the Caudal homeobox family. In terms of tissue distribution, intestinal epithelium.

The protein resides in the nucleus. Plays a role in transcriptional regulation. Involved in activated KRAS-mediated transcriptional activation of PRKD1 in colorectal cancer (CRC) cells. Binds to the PRKD1 promoter in colorectal cancer (CRC) cells. Could play a role in the terminal differentiation of the intestine. Binds preferentially to methylated DNA. The sequence is that of Homeobox protein CDX-1 (Cdx1) from Rattus norvegicus (Rat).